The following is a 103-amino-acid chain: MSDSPVDLKPKPKVKPKLERPKLYKVMLLNDDYTPREFVTVVLKAVFRMSEDTGRRVMMTAHRFGSAVVVVCERDIAETKAKEATDLGKEAGFPLMFTTEPEE.

This sequence belongs to the ClpS family. Binds to the N-terminal domain of the chaperone ClpA.

In terms of biological role, involved in the modulation of the specificity of the ClpAP-mediated ATP-dependent protein degradation. The protein is ATP-dependent Clp protease adapter protein ClpS 2 of Agrobacterium fabrum (strain C58 / ATCC 33970) (Agrobacterium tumefaciens (strain C58)).